Consider the following 376-residue polypeptide: Glutamate 5-kinase (376 aa).

Position 18 (Lys-18) interacts with ATP. The substrate site is built by Ser-58, Asp-145, and Asn-157. ATP is bound by residues 177-178 and 218-224; these read SD and TGGMASK. The 79-residue stretch at 280 to 358 folds into the PUA domain; the sequence is TGALTLDAGA…SELPGELRRP (79 aa).

This sequence belongs to the glutamate 5-kinase family.

It is found in the cytoplasm. The enzyme catalyses L-glutamate + ATP = L-glutamyl 5-phosphate + ADP. Its pathway is amino-acid biosynthesis; L-proline biosynthesis; L-glutamate 5-semialdehyde from L-glutamate: step 1/2. Functionally, catalyzes the transfer of a phosphate group to glutamate to form L-glutamate 5-phosphate. The protein is Glutamate 5-kinase of Mycobacterium tuberculosis (strain CDC 1551 / Oshkosh).